The primary structure comprises 730 residues: MNSLWPVSVSHTQLTSINHQVYVHPTPSSKDNIPGFLALAKPRGATTDKEILVAWIPESKLQESAADFESYVKVDIKESGTPASSSLNLAETLVSPPPSSSFSSYAFSIPISDIFSLQVKQPSLGWWWGSITIHTRSKEDQLPPLYFHDAESQSTIMEQKRRNKKFETFDSESGSSMFWGGDHFIQVLSKYANLERAESDHSFLLVNPREGDAERFGTNLTGGSEEPSQLVAGIPGRGAGGDPVDRGAQVQKAFSDIRWGLLSNLAKVTQLTRKVSQGVWDSSPQPVKQLLMKPEVKKIGDDFDSARIYLAKWALSVAEESQRAKLKVLFDDELRELVSDEGFELIDAENNPQRRNEVSLAEWNAFFDYNGRLIVTVNEVKERIFHGGLAPAVRPEGWLFLLGVYPWDSTAAERKELVSKLRVDYNRLKKEWWVQEDKERDDFWRDQLSRIEKDVHRTDRNITFFAECDAKKDGDDDNYDKDEFGFSSQINSNIHLIQLRDMLITYNQHNKNLGYVQGMSDLLSPLYVVLQDDTLAFWAFSAFMERMERNYLRDQSGMRNQLLCLDHLVQFMLPSLYKHLEKTESTNLFFFFRMLLVWFKRELLWDDVLRLWEVLWTDYLSSQFVLFVCLAILDKHKDVMIDHLAGFDEILKYMNELSMTIDLDELLVRAELLFYRFRRTVELIDRKNEDRRNSADGSEPVSITEDLRELLSRKVIVVREGERPEGVMGG.

Residues 434–619 enclose the Rab-GAP TBC domain; it reads VQEDKERDDF…RLWEVLWTDY (186 aa).

Most effectively accelerate the intrinsic GTPase activity of YPT7. It is also active, but to a lesser extent, on YPT31, YPT32 and YPT1. YPT6 and SEC4. This is GTPase-activating protein GYP7 (GYP7) from Yarrowia lipolytica (strain CLIB 122 / E 150) (Yeast).